The following is an 822-amino-acid chain: Calpain-3 (822 aa).

The segment at 1–36 (MPTVISASVAPRTGAEPRSPGPIAQAAQGKGTEAGG) is disordered. One can recognise a Calpain catalytic domain in the interval 74 to 418 (LFVDPEFPPD…FTKLEICNLT (345 aa)). Catalysis depends on residues cysteine 129, histidine 335, and asparagine 359. Positions 419–587 (ADALESDKLQ…KRNLSEEVEN (169 aa)) are domain III. A linker region spans residues 588–649 (TISVDRPVKK…LKPGNIDQES (62 aa)). Residues 600 to 651 (PKPIIFGSDRANSNKELGVDQESEEGKDNTSPDKQAKSPQLKPGNIDQESKE) form a disordered region. The span at 623-635 (EEGKDNTSPDKQA) shows a compositional bias: basic and acidic residues. EF-hand domains are found at residues 650-684 (KEQR…VVNK), 693-726 (FTLE…KKIK), 723-758 (KKIK…AGFH), and 788-822 (VRLE…TMYA). Residues 650–822 (KEQRQFRNIF…LEWLQLTMYA (173 aa)) are domain IV. Ca(2+) is bound by residues alanine 663, aspartate 666, glutamate 668, glutamate 673, aspartate 706, aspartate 708, serine 710, arginine 712, glutamate 717, aspartate 736, aspartate 738, serine 740, threonine 742, glutamate 747, aspartate 801, aspartate 803, aspartate 805, and isoleucine 807.

The protein belongs to the peptidase C2 family. Homodimer; via EF-hand domain 4. Interacts with TTN/titin. Interacts with CMYA5; this interaction, which results in CMYA5 proteolysis, may protect CAPN3 from autolysis. Interacts with SIMC1. Interacts with UTP25; the interaction is required for CAPN3 translocation to the nucleolus. In terms of tissue distribution, skeletal muscle.

It is found in the cytoplasm. The protein localises to the nucleus. Its subcellular location is the nucleolus. The catalysed reaction is Broad endopeptidase activity.. With respect to regulation, activated by micromolar concentrations of calcium and inhibited by calpastatin. Calcium-regulated non-lysosomal thiol-protease. Proteolytically cleaves CTBP1. Mediates, with UTP25, the proteasome-independent degradation of p53/TP53. The sequence is that of Calpain-3 (CAPN3) from Ovis aries (Sheep).